We begin with the raw amino-acid sequence, 184 residues long: Photosystem I assembly protein Ycf4 (184 aa).

2 helical membrane passes run 22–42 (FCWAFILFLGSLGFLLVGTSS) and 57–77 (IIFFPQGIVMSFYGIAGLFIS).

This sequence belongs to the Ycf4 family.

It localises to the plastid. The protein resides in the chloroplast thylakoid membrane. Functionally, seems to be required for the assembly of the photosystem I complex. This is Photosystem I assembly protein Ycf4 from Arabis hirsuta (Hairy rock-cress).